Reading from the N-terminus, the 471-residue chain is UDP-N-acetylmuramate--L-alanine ligase (471 aa).

Position 114–120 (114–120 (GTHGKTT)) interacts with ATP.

This sequence belongs to the MurCDEF family.

Its subcellular location is the cytoplasm. The enzyme catalyses UDP-N-acetyl-alpha-D-muramate + L-alanine + ATP = UDP-N-acetyl-alpha-D-muramoyl-L-alanine + ADP + phosphate + H(+). It functions in the pathway cell wall biogenesis; peptidoglycan biosynthesis. Functionally, cell wall formation. The sequence is that of UDP-N-acetylmuramate--L-alanine ligase from Rhizobium johnstonii (strain DSM 114642 / LMG 32736 / 3841) (Rhizobium leguminosarum bv. viciae).